The following is a 365-amino-acid chain: UDP-N-acetylglucosamine--N-acetylmuramyl-(pentapeptide) pyrophosphoryl-undecaprenol N-acetylglucosamine transferase (365 aa).

UDP-N-acetyl-alpha-D-glucosamine contacts are provided by residues threonine 11–glycine 13, asparagine 124, arginine 165, serine 192, isoleucine 246, and glutamine 291.

It belongs to the glycosyltransferase 28 family. MurG subfamily.

The protein resides in the cell inner membrane. The catalysed reaction is di-trans,octa-cis-undecaprenyl diphospho-N-acetyl-alpha-D-muramoyl-L-alanyl-D-glutamyl-meso-2,6-diaminopimeloyl-D-alanyl-D-alanine + UDP-N-acetyl-alpha-D-glucosamine = di-trans,octa-cis-undecaprenyl diphospho-[N-acetyl-alpha-D-glucosaminyl-(1-&gt;4)]-N-acetyl-alpha-D-muramoyl-L-alanyl-D-glutamyl-meso-2,6-diaminopimeloyl-D-alanyl-D-alanine + UDP + H(+). The protein operates within cell wall biogenesis; peptidoglycan biosynthesis. Its function is as follows. Cell wall formation. Catalyzes the transfer of a GlcNAc subunit on undecaprenyl-pyrophosphoryl-MurNAc-pentapeptide (lipid intermediate I) to form undecaprenyl-pyrophosphoryl-MurNAc-(pentapeptide)GlcNAc (lipid intermediate II). In Nitratidesulfovibrio vulgaris (strain DP4) (Desulfovibrio vulgaris), this protein is UDP-N-acetylglucosamine--N-acetylmuramyl-(pentapeptide) pyrophosphoryl-undecaprenol N-acetylglucosamine transferase.